The following is a 249-amino-acid chain: Metallo-beta-lactamase type 2 (249 aa).

Residues 1–22 (MLKKIKISLILALGLTSLQAFG) form the signal peptide. Positions 98, 100, 102, 161, and 180 each coordinate Zn(2+). Residue Lys183 participates in substrate binding. His222 contributes to the Zn(2+) binding site.

It belongs to the metallo-beta-lactamase superfamily. Class-B beta-lactamase family. Monomer. The cofactor is Zn(2+).

The protein localises to the periplasm. The catalysed reaction is a beta-lactam + H2O = a substituted beta-amino acid. Its function is as follows. Confers resistance to the different beta-lactams antibiotics (penicillin, cephalosporin and carbapenem) via the hydrolysis of the beta-lactam ring. This is Metallo-beta-lactamase type 2 (blaB2) from Elizabethkingia meningoseptica (Chryseobacterium meningosepticum).